A 259-amino-acid polypeptide reads, in one-letter code: Probable transcriptional regulatory protein Noca_2383 (259 aa).

It belongs to the TACO1 family.

It is found in the cytoplasm. The protein is Probable transcriptional regulatory protein Noca_2383 of Nocardioides sp. (strain ATCC BAA-499 / JS614).